The following is a 373-amino-acid chain: Transcription factor NF-E2 45 kDa subunit (373 aa).

The required for interaction with MAPK8 stretch occupies residues 1-83 (MSPCPPQQSR…SGFPLPPPPY (83 aa)). The transactivation domain stretch occupies residues 1 to 206 (MSPCPPQQSR…PAAETPLALE (206 aa)). 2 short sequence motifs (PXY motif) span residues 61–65 (PPTTY) and 79–83 (PPPPY). The tract at residues 127–150 (LDIGLPAGPPKPQEDPESDSGLSL) is disordered. At serine 157 the chain carries Phosphoserine; by MAPK8. The residue at position 170 (serine 170) is a Phosphoserine; by PKA. Residues 205–226 (LEPSSGPVRAKPTARGEAGSRD) are disordered. Residues 266 to 329 (LVRDIRRRGK…EVMRQQLTEL (64 aa)) enclose the bZIP domain. A basic motif region spans residues 268–287 (RDIRRRGKNKVAAQNCRKRK). Residues 291 to 298 (IVQLEREL) form a leucine-zipper region. Residue lysine 368 forms a Glycyl lysine isopeptide (Lys-Gly) (interchain with G-Cter in SUMO1) linkage.

The protein belongs to the bZIP family. CNC subfamily. Homodimer; can bind DNA as a homodimer. Erythroid transcription activator nuclear factor erythroid-derived 2 (NF-E2), composed of a heterodimer of NFE2 and MAFK, possesses transactivation activity on beta-globin. Also forms high affinity heterodimer with MAFG; the interaction promotes erythropoiesis. Interacts (via the PXY motif 1) with ITCH (via the WW 1 domain); the interaction promotes 'Lys63'-linked ubiquitination of NFE2, translocates it to the cytoplasm and inhibits its transactivation activity. Interacts with KMT2D/MLL2; the interaction promotes transactivation of the beta-globin locus. Interacts with MAPK8 (phosphorylated form); the interaction leads to phosphorylation of NFE2 in undifferentiated cells. Post-translationally, phosphorylated on serine residues. In undifferentiated erythrocytes, phosphorylated by MAPK8 which then leads to ubiquitination and protein degradation. In terms of processing, sumoylated. Sumoylation is required for translocation to nuclear bodies PODs, anchoring to the gene loci, and transactivation of the beta-globin gene. Ubiquitinated mainly by 'Lys63'-linked ubiquitin. Polyubiquitination with 'Lys63'-linked ubiquitin by ITCH retains NFE2 in the cytoplasm preventing its transactivation activity. In undifferentiated erythrocyte, ubiquitinated after MAPK8-mediatd phosphorylation leading to protein degradation. As to expression, expressed in hematopoietic cells and also in colon and testis.

Its subcellular location is the nucleus. It localises to the PML body. It is found in the cytoplasm. Component of the NF-E2 complex essential for regulating erythroid and megakaryocytic maturation and differentiation. Binds to the hypersensitive site 2 (HS2) of the beta-globin control region (LCR). This subunit (NFE2) recognizes the TCAT/C sequence of the AP-1-like core palindrome present in a number of erythroid and megakaryocytic gene promoters. Requires MAFK or other small MAF proteins for binding to the NF-E2 motif. May play a role in all aspects of hemoglobin production from globin and heme synthesis to procurement of iron. The polypeptide is Transcription factor NF-E2 45 kDa subunit (NFE2) (Homo sapiens (Human)).